The primary structure comprises 284 residues: Transmembrane protein 163b (284 aa).

Residues 1–44 (MTDSSSASDPTAGPVDPGPAPSAPDPALEDPASTPANGHHPNQA) are disordered. Over 1–83 (MTDSSSASDP…HEAQSYRKKA (83 aa)) the chain is Cytoplasmic. A helical transmembrane segment spans residues 84–104 (LWVSWVSIVVTMILAIAAFTV). Topologically, residues 105 to 111 (SIMRHSA) are extracellular. The helical transmembrane segment at 112-132 (SAFGFAFDATLDVLSSIIVLW) threads the bilayer. At 133–145 (RYSNAAAVHSAHR) the chain is on the cytoplasmic side. A helical transmembrane segment spans residues 146-166 (EYIACVILGVVFILSAITILV). Residues 167–182 (KAIHDLATKLEPEVDD) are Extracellular-facing. A helical transmembrane segment spans residues 183–203 (FLYSVSVISGVVCTVLCVCKF). Residues 204–212 (MLGKVLTSR) lie on the Cytoplasmic side of the membrane. The chain crosses the membrane as a helical span at residues 213–233 (ALITDGFNSLVGGVMGFSILI). At 234–243 (SAEVFKHEPS) the chain is on the extracellular side. A helical membrane pass occupies residues 244 to 264 (VWFLDGTIGILIGLIILAYGV). At 265–284 (KLLKDMVPRIRQTRHYERFE) the chain is on the cytoplasmic side.

The protein belongs to the TMEM163 family.

It localises to the cytoplasmic vesicle. Its subcellular location is the secretory vesicle. The protein resides in the synaptic vesicle membrane. The protein localises to the early endosome membrane. It is found in the late endosome membrane. It localises to the lysosome membrane. Its subcellular location is the cell membrane. It catalyses the reaction Zn(2+)(in) = Zn(2+)(out). In terms of biological role, zinc ion transporter that mediates zinc efflux and plays a crucial role in intracellular zinc homeostasis. Binds the divalent cations Zn(2+), Ni(2+), and to a minor extent Cu(2+). Is a functional modulator of P2X purinoceptors, including P2RX1, P2RX3, P2RX4 and P2RX7. Plays a role in central nervous system development and is required for myelination, and survival and proliferation of oligodendrocytes. The sequence is that of Transmembrane protein 163b from Danio rerio (Zebrafish).